We begin with the raw amino-acid sequence, 203 residues long: Glycerol-3-phosphate acyltransferase (203 aa).

The next 5 helical transmembrane spans lie at 12 to 32, 66 to 86, 88 to 108, 118 to 138, and 159 to 179; these read ATLLCLAFGYLLGSIPFGLIL, TLLLDALKGTAAAAIASLWGV, AGIAAGLAAFLGHLFPVWLSF, IGVLLGLAPLMVPAFAAIWLA, and IALYATGYGKVALLFALMTVI.

It belongs to the PlsY family. As to quaternary structure, probably interacts with PlsX.

Its subcellular location is the cell inner membrane. The catalysed reaction is an acyl phosphate + sn-glycerol 3-phosphate = a 1-acyl-sn-glycero-3-phosphate + phosphate. It functions in the pathway lipid metabolism; phospholipid metabolism. Functionally, catalyzes the transfer of an acyl group from acyl-phosphate (acyl-PO(4)) to glycerol-3-phosphate (G3P) to form lysophosphatidic acid (LPA). This enzyme utilizes acyl-phosphate as fatty acyl donor, but not acyl-CoA or acyl-ACP. The polypeptide is Glycerol-3-phosphate acyltransferase (Sinorhizobium fredii (strain NBRC 101917 / NGR234)).